The primary structure comprises 863 residues: MAGPRGALLAWCRRQCEGYRGVEIRDLSSSFRDGLAFCAILHRHRPDLLDFDSLSKDNVFENNRLAFEVAEKELGIPALLDPNDMVSMSVPDCLSIMTYVSQYYNHFCSPGQAGVSPPRKGLAPCSPPSVAPTPVEPEDVAQGEELSSGSLSEQGTGQTPSSTCAACQQHVHLVQRYLADGRLYHRHCFRCRRCSSTLLPGAYENGPEEGTFVCAEHCARLGPGTRSGTRPGPFSQPKQQHQQQLAEDAKDVPGGGPSSSAPAGAEADGPKASPEARPQIPTKPRVPGKLQELASPPAGRPTPAPRKASESTTPAPPTPRPRSSLQQENLVEQAGSSSLVNGRLHELPVPKPRGTPKPSEGTPAPRKDPPWITLVQAEPKKKPAPLPPSSSPGPPSQDSRQVENGGTEEVAQPSPTASLESKPYNPFEEEEEDKEEEAPAAPSLATSPALGHPESTPKSLHPWYGITPTSSPKTKKRPAPRAPSASPLALHASRLSHSEPPSATPSPALSVESLSSESASQTAGAELLEPPAVPKSSSEPAVHAPGTPGNPVSLSTNSSLASSGELVEPRVEQMPQASPGLAPRTRGSSGPQPAKPCSGATPTPLLLVGDRSPVPSPGSSSPQLQVKSSCKENPFNRKPSPAASPATKKATKGSKPVRPPAPGHGFPLIKRKVQADQYIPEEDIHGEMDTIERRLDALEHRGVLLEEKLRGGLNEGREDDMLVDWFKLIHEKHLLVRRESELIYVFKQQNLEQRQADVEYELRCLLNKPEKDWTEEDRAREKVLMQELVTLIEQRNAIINCLDEDRQREEEEDKMLEAMIKKKEFQREAEPEGKKKGKFKTMKMLKLLGNKRDAKSKSPRDKS.

One can recognise a Calponin-homology (CH) domain in the interval A2 to C108. Disordered regions lie at residues R119–S162 and G224–K670. The span at C125–V135 shows a compositional bias: pro residues. Composition is skewed to low complexity over residues G143–T159 and G224–Q244. Residues S162–T225 enclose the LIM zinc-binding domain. Residues S295 and S309 each carry the phosphoserine modification. The residue at position 318 (T318) is a Phosphothreonine. Residues L325–V340 show a composition bias toward polar residues. Positions A384–P395 are enriched in pro residues. S391 is subject to Phosphoserine. The short motif at N425 to F427 is the NPF1 element. Acidic residues predominate over residues F427–A438. The span at P439–L450 shows a compositional bias: low complexity. Phosphothreonine occurs at positions 467 and 469. Phosphoserine occurs at positions 470, 471, 484, and 486. 3 stretches are compositionally biased toward low complexity: residues A482 to L495, P505 to S520, and S553 to L566. 2 positions are modified to phosphoserine: S578 and S621. An NPF2 motif is present at residues N633 to F635. Low complexity predominate over residues K638 to P656. Residues K652 to S863 form a mediates the interaction with RAB13 and RAB35 and intramolecular interaction with the CH domain region. The bMERB domain occupies R671–A818. Residues E682–G711 adopt a coiled-coil conformation. A necessary and sufficient to associate with tubular recycling endosome membranes, mediate phosphatidic acid-binding and membrane tubulation region spans residues H700–S863. S740 bears the Phosphoserine mark. Residues M785 to E830 adopt a coiled-coil conformation.

In terms of assembly, homooligomer. Interacts (via NPF1 motif) with EHD1 (via EH domain); the interaction is direct and probably recruits EHD1 to membranes. Interacts with EHD3 (via EH domain). Interacts with RAB35 (GTP-bound form); the interaction is direct and probably recruits MICALL1 to membranes. Interacts with ACAP2; the interaction is indirect through RAB35. Interacts with RAB8A (GTP-bound form); regulates RAB8A association with recycling endosomes. Interacts with RAB13 (GTP-bound form). Interacts with ARF6 (GTP-bound form). Interacts with PACSIN2 (via the SH3 domain). Interacts with DPYSL2.

Its subcellular location is the recycling endosome membrane. It is found in the late endosome membrane. The protein resides in the cell projection. The protein localises to the cilium membrane. It localises to the cytoplasm. Its subcellular location is the cytoskeleton. It is found in the microtubule organizing center. The protein resides in the centrosome. The protein localises to the centriole. Lipid-binding protein with higher affinity for phosphatidic acid, a lipid enriched in recycling endosome membranes. On endosome membranes, acts as a downstream effector of Rab proteins recruiting cytosolic proteins to regulate membrane tubulation. Involved in a late step of receptor-mediated endocytosis regulating for instance endocytosed-EGF receptor trafficking. Alternatively, regulates slow endocytic recycling of endocytosed proteins back to the plasma membrane. Also involved in cargo protein delivery to the plasma membrane. Plays a role in ciliogenesis coordination, recruits EHD1 to primary cilium where it is anchored to the centriole through interaction with tubulins. May indirectly play a role in neurite outgrowth. This Homo sapiens (Human) protein is MICAL-like protein 1 (MICALL1).